The chain runs to 753 residues: 5-methyltetrahydropteroyltriglutamate--homocysteine methyltransferase (753 aa).

Residues 17-20 and Lys-117 each bind 5-methyltetrahydropteroyltri-L-glutamate; that span reads RELK. L-homocysteine contacts are provided by residues 431 to 433 and Glu-484; that span reads IGS. L-methionine is bound by residues 431–433 and Glu-484; that span reads IGS. 5-methyltetrahydropteroyltri-L-glutamate-binding positions include 515 to 516 and Trp-561; that span reads RC. An L-homocysteine-binding site is contributed by Asp-599. Residue Asp-599 participates in L-methionine binding. Glu-605 contributes to the 5-methyltetrahydropteroyltri-L-glutamate binding site. His-641, Cys-643, and Glu-665 together coordinate Zn(2+). The active-site Proton donor is the His-694. Cys-726 contacts Zn(2+).

It belongs to the vitamin-B12 independent methionine synthase family. Requires Zn(2+) as cofactor.

It carries out the reaction 5-methyltetrahydropteroyltri-L-glutamate + L-homocysteine = tetrahydropteroyltri-L-glutamate + L-methionine. It participates in amino-acid biosynthesis; L-methionine biosynthesis via de novo pathway; L-methionine from L-homocysteine (MetE route): step 1/1. Catalyzes the transfer of a methyl group from 5-methyltetrahydrofolate to homocysteine resulting in methionine formation. This is 5-methyltetrahydropteroyltriglutamate--homocysteine methyltransferase from Cronobacter sakazakii (strain ATCC BAA-894) (Enterobacter sakazakii).